Reading from the N-terminus, the 185-residue chain is Kappa-casein (185 aa).

Positions 1–20 are cleaved as a signal peptide; it reads MKSFFLVVNILALTLPFLGA. A glycan (O-linked (GalNAc...) threonine) is linked at Thr-143. Ser-161 carries the post-translational modification Phosphoserine; alternate. Ser-161 is a glycosylation site (O-linked (GalNAc...) serine; alternate). O-linked (GalNAc...) threonine glycosylation occurs at Thr-178. A Phosphoserine modification is found at Ser-179.

This sequence belongs to the kappa-casein family. As to expression, mammary gland specific. Secreted in milk.

It localises to the secreted. Kappa-casein stabilizes micelle formation, preventing casein precipitation in milk. This Equus caballus (Horse) protein is Kappa-casein (CSN3).